The chain runs to 350 residues: Glyoxylate reductase 1 (350 aa).

Phosphothreonine is present on T31. Residues 173–174 (RI), 252–254 (TAR), and D278 contribute to the NAD(+) site. Residue R254 is part of the active site. E283 is a catalytic residue. The active-site Proton donor is the H301. 301–304 (HMGT) is an NAD(+) binding site.

This sequence belongs to the D-isomer specific 2-hydroxyacid dehydrogenase family.

The protein resides in the cytoplasm. The protein localises to the nucleus. It is found in the mitochondrion. It carries out the reaction glycolate + NAD(+) = glyoxylate + NADH + H(+). The enzyme catalyses glycolate + NADP(+) = glyoxylate + NADPH + H(+). The catalysed reaction is (R)-glycerate + NAD(+) = 3-hydroxypyruvate + NADH + H(+). It catalyses the reaction (R)-glycerate + NADP(+) = 3-hydroxypyruvate + NADPH + H(+). Its function is as follows. Glyoxylate reductase that reversibly reduces glyoxylate to glycolate, or alternatively hydroxypyruvate to D-glycerate, using either NADPH or NADH as a cosubstrate. Does not act as a hydroxyisocaproate dehydrogenase even though it also has minor activity on alpha-ketoisocaproate. In Saccharomyces cerevisiae (strain ATCC 204508 / S288c) (Baker's yeast), this protein is Glyoxylate reductase 1.